The sequence spans 285 residues: Enterobactin synthase component B (285 aa).

The tract at residues Ala2 to Ala213 is isochorismatase. The region spanning Ala209 to Val284 is the Carrier domain. Mg(2+) contacts are provided by Asp227, Gly242, and Asp244. O-(pantetheine 4'-phosphoryl)serine is present on Ser245.

This sequence in the N-terminal section; belongs to the isochorismatase family. As to quaternary structure, proteins EntB, EntD, EntE, and EntF form a multienzyme complex called enterobactin synthase. Homodimer. Also forms a specific pairwise interaction with EntC; this interaction likely facilitates substrate channeling to connect the EntB and EntC active sites. Requires Mg(2+) as cofactor. Post-translationally, 4'-phosphopantetheine is transferred from CoA to a specific serine of apo-EntB by EntD. Holo-EntB so formed is then acylated with 2,3-dihydroxybenzoate in a reaction catalyzed by EntE.

It localises to the cytoplasm. The enzyme catalyses 3 2,3-dihydroxybenzoate + 3 L-serine + 6 ATP = enterobactin + 6 AMP + 6 diphosphate + 4 H(+). It catalyses the reaction isochorismate + H2O = (2S,3S)-2,3-dihydroxy-2,3-dihydrobenzoate + pyruvate. The protein operates within siderophore biosynthesis; enterobactin biosynthesis. Its function is as follows. Involved in the biosynthesis of the siderophore enterobactin (enterochelin), which is a macrocyclic trimeric lactone of N-(2,3-dihydroxybenzoyl)-serine. The serine trilactone serves as a scaffolding for the three catechol functionalities that provide hexadentate coordination for the tightly ligated iron(3+) atoms. EntB is a bifunctional protein that serves as an isochorismate lyase and an aryl carrier protein (ArCP). Catalyzes the conversion of isochorismate to 2,3-dihydro-2,3-dihydroxybenzoate (2,3-diDHB), the precursor of 2,3-dihydroxybenzoate (DHB). In the enterobactin assembly, EntB functions as an aryl carrier protein phosphopantetheinylated near the C terminus by EntD to yield holo-EntB, which is then acylated by EntE with 2,3-dihydroxybenzoyl-AMP to form DHB-holo-EntB. Then this product will serve in the formation of the amide bond between 2,3-dihydroxybenzoate (DHB) and L-serine. The sequence is that of Enterobactin synthase component B from Escherichia coli O157:H7.